Consider the following 356-residue polypeptide: Serpentine receptor class epsilon-29 (356 aa).

7 helical membrane-spanning segments follow: residues 29-49 (IVEL…IYII), 61-81 (ILAI…LITI), 119-139 (LLIF…FGVL), 161-181 (LFIP…TSLA), 190-210 (FLAQ…YFFV), 251-271 (LVFV…ALFY), and 281-301 (FVEN…IFSV).

Belongs to the nematode receptor-like protein sre family.

Its subcellular location is the membrane. In Caenorhabditis elegans, this protein is Serpentine receptor class epsilon-29 (sre-29).